A 726-amino-acid polypeptide reads, in one-letter code: MASVMSNNNNNNNNNNASYMFTNPLSNTGGGLINEIKDAINEMEQLKVLELKQICKSLDLSITGKKAVLQDRIKQFLRKSCDIGHIDPWRPKAIKILIAKVRINSSLPKYSTLWETLKTGAFKHPVASGQLPVTALQSTALPPYSQQQALAYSFTSPFYKPIVQIPDANKKLKQSAGRGCTKMKFKVSKSNHDLLKSNKSYKLYLFSGFSIPFIYETVGHEAIDFPYPCELVFNGTKLEDNVKGLKKQNGTGNPANLTPYLKVPTEMNHLDLHYLNIDKEYSISCFIVEVFSPEALLGKILKRPKIIKQATTAYIKRTLNEQDDDDIITTSTVLSLQCPISCTRMKYPAKTDQCKHIQCFDALWFLHSQSQVPTWQCPICQHPIKFDQLKISEFVDNIIQNCNEDVEQVEISVDGSWKPIHNSSAVITDTVNQNHSVKNENQGTVKQEQDYDSRNAFDTNLRNGSNHNEPEIISLDSSDDEAFIPASKSFPTHVNPRNDQLRADIFPSESEGSSDYNPNHTSTPKGSPTMDQDNYQDAFQMRSFLNQGATTNINDTPTNNSSINSFVTATNGDSRIFYNRGPSTPLLPAVLQNLTNQTEAQRNPYGPNYNTTAQDRNLLGIEGDLPPIPPVDPNSEAETELPTRTTSAAHLPPYIHVSTSGHGDDGKIRKRRHSNVSIYIPKNPYATLMKRRPQANHAIMNKTLAQTNDFNTSAQDNSEVVDLTSD.

Residues 43 to 77 form the SAP domain; that stretch reads MEQLKVLELKQICKSLDLSITGKKAVLQDRIKQFL. The PINIT domain maps to 139 to 291; it reads TALPPYSQQQ…SISCFIVEVF (153 aa). An SP-RING-type zinc finger spans residues 323–408; that stretch reads DDDDIITTST…IQNCNEDVEQ (86 aa). 4 residues coordinate Zn(2+): Cys-354, His-356, Cys-377, and Cys-380. Positions 507–533 are disordered; it reads PSESEGSSDYNPNHTSTPKGSPTMDQD. Residues 510–533 show a composition bias toward polar residues; the sequence is SEGSSDYNPNHTSTPKGSPTMDQD.

The protein belongs to the PIAS family. As to quaternary structure, interacts with CDC12. In terms of processing, autosumoylated upon ethanol stress.

It localises to the nucleus. The protein operates within protein modification; protein sumoylation. Functionally, may act as an E3 ligase mediating SUMO/Smt3 attachment to septins. May be involved in chromosome maintenance. The polypeptide is E3 SUMO-protein ligase SIZ2 (NFI1) (Saccharomyces cerevisiae (strain ATCC 204508 / S288c) (Baker's yeast)).